We begin with the raw amino-acid sequence, 196 residues long: UPF0314 protein Oant_0840 (196 aa).

The next 4 helical transmembrane spans lie at 15–35 (WGLG…WLYF), 65–85 (WYTL…TVIA), 127–147 (FGDS…GFLI), and 151–171 (LPTK…LIVI).

Belongs to the UPF0314 family.

It localises to the cell membrane. The polypeptide is UPF0314 protein Oant_0840 (Brucella anthropi (strain ATCC 49188 / DSM 6882 / CCUG 24695 / JCM 21032 / LMG 3331 / NBRC 15819 / NCTC 12168 / Alc 37) (Ochrobactrum anthropi)).